Consider the following 585-residue polypeptide: Eukaryotic translation initiation factor 3 subunit D (585 aa).

The span at 43–60 shows a compositional bias: basic and acidic residues; it reads LGRMADWTGDGKDRDRGG. Disordered stretches follow at residues 43-62 and 109-152; these read LGRM…GGRQ and RGGG…NRSA. A compositionally biased stretch (gly residues) spans 109–130; that stretch reads RGGGTVFRGRGQRGVGQRGGRA. The segment at 300–314 is RNA gate; that stretch reads SIDLVTVNENAADAP. A disordered region spans residues 560 to 585; that stretch reads VPPNTFEEDDEAAEEQEEKAEEESEE. Residues 565–585 are compositionally biased toward acidic residues; it reads FEEDDEAAEEQEEKAEEESEE.

It belongs to the eIF-3 subunit D family. As to quaternary structure, component of the eukaryotic translation initiation factor 3 (eIF-3) complex.

The protein localises to the cytoplasm. Functionally, mRNA cap-binding component of the eukaryotic translation initiation factor 3 (eIF-3) complex, which is involved in protein synthesis of a specialized repertoire of mRNAs and, together with other initiation factors, stimulates binding of mRNA and methionyl-tRNAi to the 40S ribosome. The eIF-3 complex specifically targets and initiates translation of a subset of mRNAs involved in cell proliferation. In the eIF-3 complex, eif3d specifically recognizes and binds the 7-methylguanosine cap of a subset of mRNAs. This chain is Eukaryotic translation initiation factor 3 subunit D, found in Neosartorya fischeri (strain ATCC 1020 / DSM 3700 / CBS 544.65 / FGSC A1164 / JCM 1740 / NRRL 181 / WB 181) (Aspergillus fischerianus).